The chain runs to 153 residues: Transcription antitermination protein NusB (153 aa).

The protein belongs to the NusB family.

In terms of biological role, involved in transcription antitermination. Required for transcription of ribosomal RNA (rRNA) genes. Binds specifically to the boxA antiterminator sequence of the ribosomal RNA (rrn) operons. The polypeptide is Transcription antitermination protein NusB (Beutenbergia cavernae (strain ATCC BAA-8 / DSM 12333 / CCUG 43141 / JCM 11478 / NBRC 16432 / NCIMB 13614 / HKI 0122)).